Here is a 130-residue protein sequence, read N- to C-terminus: Arsenical-resistance protein 2 (130 aa).

Residues 17–124 (QRKDFQVVDL…WETHCRESNL (108 aa)) form the Rhodanese domain.

In terms of biological role, involved in resistance to arsenic compounds. This is Arsenical-resistance protein 2 (ARR2) from Saccharomyces cerevisiae (strain ATCC 204508 / S288c) (Baker's yeast).